The following is a 274-amino-acid chain: Ribosomal RNA small subunit methyltransferase A (274 aa).

6 residues coordinate S-adenosyl-L-methionine: H15, L17, G42, E64, D89, and N108.

Belongs to the class I-like SAM-binding methyltransferase superfamily. rRNA adenine N(6)-methyltransferase family. RsmA subfamily.

It localises to the cytoplasm. The catalysed reaction is adenosine(1518)/adenosine(1519) in 16S rRNA + 4 S-adenosyl-L-methionine = N(6)-dimethyladenosine(1518)/N(6)-dimethyladenosine(1519) in 16S rRNA + 4 S-adenosyl-L-homocysteine + 4 H(+). Its function is as follows. Specifically dimethylates two adjacent adenosines (A1518 and A1519) in the loop of a conserved hairpin near the 3'-end of 16S rRNA in the 30S particle. May play a critical role in biogenesis of 30S subunits. The chain is Ribosomal RNA small subunit methyltransferase A from Prochlorococcus marinus (strain AS9601).